The primary structure comprises 212 residues: MKERIFNKYFPDLDKSIIKKFIKLYKIHKFFNKKINIISNNSLNFFYERHILHSLCVYKICYFLNKSIIIDVGTGGGFPGIPLALLFNKTKFILIDSIEKKIKIINLIIKELHLKNVYVKCTRIENFHNKCNFIIGRAVTKLPNFIRLVKKNFLFKKKNKINNGILYLKGGEFENEKNNQYLYIKYNIYNFLKKFFFKKKLFIFLLFNIKII.

S-adenosyl-L-methionine is bound by residues Gly-73, Phe-78, 124–125 (IE), and Arg-137.

This sequence belongs to the methyltransferase superfamily. RNA methyltransferase RsmG family.

It is found in the cytoplasm. Functionally, specifically methylates the N7 position of a guanine in 16S rRNA. This is Ribosomal RNA small subunit methyltransferase G from Karelsulcia muelleri (strain GWSS) (Sulcia muelleri).